Here is a 197-residue protein sequence, read N- to C-terminus: Transmembrane 4 L6 family member 5 (197 aa).

The Cytoplasmic portion of the chain corresponds to 1 to 9 (MCTGKCARC). Residues 10-30 (VGLSLITLCLVCIVANALLLV) traverse the membrane as a helical segment. The Extracellular segment spans residues 31–46 (PNGETSWTNTNHLSLQ). The chain crosses the membrane as a helical span at residues 47–67 (VWLMGGFIGGGLMVLCPGIAA). Residues 68–90 (VRAGGKGCCGAGCCGNRCRMLRS) lie on the Cytoplasmic side of the membrane. The helical transmembrane segment at 91–111 (VFSSAFGVLGAIYCLSVSGAG) threads the bilayer. Positions 91-197 (VFSSAFGVLG…DCRKKQDTPH (107 aa)) are interaction with MTOR and CASTOR1. The Extracellular portion of the chain corresponds to 112-157 (LRNGPRCLMNGEWGYHFEDTAGAYLLNRTLWDRCEAPPRVVPWNVT). An L-arginine-binding site is contributed by 124-129 (WGYHFE). N-linked (GlcNAc...) asparagine glycosylation is found at Asn138 and Asn155. The helical transmembrane segment at 158 to 178 (LFSLLVAASCLEIVLCGIQLV) threads the bilayer. Topologically, residues 179–197 (NATIGVFCGDCRKKQDTPH) are cytoplasmic.

It belongs to the L6 tetraspanin family. As to quaternary structure, interacts with MTOR; the interaction is positively regulated by arginine and is negatively regulated by leucine. Interacts with SLC38A9. Interacts with SLC7A1; the interaction is negatively regulated by arginine. Interacts with CASTOR1; the interaction is positively regulated by leucine and is negatively regulated by arginine. As to expression, intestine. Overexpressed in pancreatic cancers.

Its subcellular location is the lysosome membrane. The protein localises to the cell membrane. Functionally, acts as a lysosomal membrane arginine sensor. Forms a complex with MTOR and SLC38A9 on lysosomal membranes in an arginine-regulated manner, leading to arginine efflux which enables the activation of mTORC1 which subsequently leads to RPS6KB1 and EIF4EBP1 phosphorylations. Facilitates cell cycle G1/S phase progression and the translocation of the CDK4-CCND1 complex into the nucleus. CDKN1B and RHOA/ROCK signaling activity are involved in TM4SF5-mediated acceleration of G1/S phase progression. This is Transmembrane 4 L6 family member 5 (TM4SF5) from Homo sapiens (Human).